The primary structure comprises 361 residues: Chorismate synthase (361 aa).

2 residues coordinate NADP(+): Arg48 and Arg54. FMN contacts are provided by residues 125–127 (RSS), 238–239 (NA), Gly278, 293–297 (KPTSS), and Arg319.

It belongs to the chorismate synthase family. In terms of assembly, homotetramer. FMNH2 serves as cofactor.

It carries out the reaction 5-O-(1-carboxyvinyl)-3-phosphoshikimate = chorismate + phosphate. It participates in metabolic intermediate biosynthesis; chorismate biosynthesis; chorismate from D-erythrose 4-phosphate and phosphoenolpyruvate: step 7/7. Its function is as follows. Catalyzes the anti-1,4-elimination of the C-3 phosphate and the C-6 proR hydrogen from 5-enolpyruvylshikimate-3-phosphate (EPSP) to yield chorismate, which is the branch point compound that serves as the starting substrate for the three terminal pathways of aromatic amino acid biosynthesis. This reaction introduces a second double bond into the aromatic ring system. The polypeptide is Chorismate synthase (Shigella flexneri).